A 96-amino-acid chain; its full sequence is Aspartyl/glutamyl-tRNA(Asn/Gln) amidotransferase subunit C (96 aa).

This sequence belongs to the GatC family. As to quaternary structure, heterotrimer of A, B and C subunits.

The enzyme catalyses L-glutamyl-tRNA(Gln) + L-glutamine + ATP + H2O = L-glutaminyl-tRNA(Gln) + L-glutamate + ADP + phosphate + H(+). It catalyses the reaction L-aspartyl-tRNA(Asn) + L-glutamine + ATP + H2O = L-asparaginyl-tRNA(Asn) + L-glutamate + ADP + phosphate + 2 H(+). Functionally, allows the formation of correctly charged Asn-tRNA(Asn) or Gln-tRNA(Gln) through the transamidation of misacylated Asp-tRNA(Asn) or Glu-tRNA(Gln) in organisms which lack either or both of asparaginyl-tRNA or glutaminyl-tRNA synthetases. The reaction takes place in the presence of glutamine and ATP through an activated phospho-Asp-tRNA(Asn) or phospho-Glu-tRNA(Gln). This Chloroflexus aggregans (strain MD-66 / DSM 9485) protein is Aspartyl/glutamyl-tRNA(Asn/Gln) amidotransferase subunit C.